Here is a 285-residue protein sequence, read N- to C-terminus: tRNA U34 carboxymethyltransferase (285 aa).

Residues Lys56, Trp70, Lys75, Gly94, 143-144, Tyr163, and Arg278 each bind carboxy-S-adenosyl-L-methionine; that span reads VE.

This sequence belongs to the class I-like SAM-binding methyltransferase superfamily. CmoB family. Homotetramer.

The catalysed reaction is carboxy-S-adenosyl-L-methionine + 5-hydroxyuridine(34) in tRNA = 5-carboxymethoxyuridine(34) in tRNA + S-adenosyl-L-homocysteine + H(+). Catalyzes carboxymethyl transfer from carboxy-S-adenosyl-L-methionine (Cx-SAM) to 5-hydroxyuridine (ho5U) to form 5-carboxymethoxyuridine (cmo5U) at position 34 in tRNAs. The protein is tRNA U34 carboxymethyltransferase of Campylobacter hominis (strain ATCC BAA-381 / DSM 21671 / CCUG 45161 / LMG 19568 / NCTC 13146 / CH001A).